Reading from the N-terminus, the 199-residue chain is ATP-dependent Clp protease proteolytic subunit (199 aa).

Residue serine 99 is the Nucleophile of the active site. The active site involves histidine 124.

It belongs to the peptidase S14 family. Fourteen ClpP subunits assemble into 2 heptameric rings which stack back to back to give a disk-like structure with a central cavity, resembling the structure of eukaryotic proteasomes.

The protein resides in the cytoplasm. It carries out the reaction Hydrolysis of proteins to small peptides in the presence of ATP and magnesium. alpha-casein is the usual test substrate. In the absence of ATP, only oligopeptides shorter than five residues are hydrolyzed (such as succinyl-Leu-Tyr-|-NHMec, and Leu-Tyr-Leu-|-Tyr-Trp, in which cleavage of the -Tyr-|-Leu- and -Tyr-|-Trp bonds also occurs).. Functionally, cleaves peptides in various proteins in a process that requires ATP hydrolysis. Has a chymotrypsin-like activity. Plays a major role in the degradation of misfolded proteins. The protein is ATP-dependent Clp protease proteolytic subunit of Lactococcus lactis subsp. lactis (strain IL1403) (Streptococcus lactis).